The following is a 628-amino-acid chain: Very-long-chain aldehyde decarbonylase GL1-2 (628 aa).

5 helical membrane passes run 37–57 (GAAP…ARGL), 131–151 (GWAI…YWAH), 191–211 (VVIG…VGLV), 299–319 (DFVF…PFVL), and 331–351 (FVLL…WCCS). The 141-residue stretch at 137-277 (LLHVLVAEPL…MPIFDLLGGT (141 aa)) folds into the Fatty acid hydroxylase domain.

Belongs to the sterol desaturase family. Homodimer.

It localises to the endoplasmic reticulum membrane. It carries out the reaction a long-chain fatty aldehyde + 2 NADPH + O2 + H(+) = a long-chain alkane + formate + 2 NADP(+) + H2O. In terms of biological role, aldehyde decarbonylase involved in the conversion of aldehydes to alkanes. Core component of a very-long-chain alkane synthesis complex. This Oryza sativa subsp. indica (Rice) protein is Very-long-chain aldehyde decarbonylase GL1-2.